A 111-amino-acid chain; its full sequence is uncharacterized protein (111 aa).

A signal peptide spans 1-18; it reads MGKSMEEGIFVKVFPSKA.

This is an uncharacterized protein from Acidianus convivator (ATV).